A 958-amino-acid polypeptide reads, in one-letter code: Dermatan-sulfate epimerase (958 aa).

Residues 1 to 22 (MRTHTRGAPSVFFICLFCFVSA) form the signal peptide. Topologically, residues 23-902 (CVTDENPEVM…APALSASYTR (880 aa)) are lumenal. A glycan (N-linked (GlcNAc...) asparagine) is linked at N183. The Proton donor role is filled by H205. Y261 is an active-site residue. N336 and N411 each carry an N-linked (GlcNAc...) asparagine glycan. Mn(2+)-binding residues include H452 and E470. Residue Y473 is part of the active site. N481 provides a ligand contact to Mn(2+). N-linked (GlcNAc...) asparagine glycans are attached at residues N642 and N648. The helical transmembrane segment at 903–923 (LFLILNIAIFFVMLAMQLTYF) threads the bilayer. Residues 924–933 (QRAQSLHGQR) lie on the Cytoplasmic side of the membrane. The helical transmembrane segment at 934 to 954 (CLYAVLLIDSCILLWLYSSCS) threads the bilayer. Topologically, residues 955 to 958 (QSQC) are lumenal.

This sequence belongs to the dermatan-sulfate isomerase family. Mn(2+) is required as a cofactor. N-glycosylated. Glycosylation is important for enzymatic activity.

It localises to the endoplasmic reticulum membrane. It is found in the golgi apparatus membrane. The protein localises to the cytoplasmic vesicle membrane. Its subcellular location is the microsome membrane. It carries out the reaction chondroitin 4'-sulfate = dermatan 4'-sulfate. The protein operates within glycan metabolism; chondroitin sulfate biosynthesis. It functions in the pathway glycan metabolism; heparan sulfate biosynthesis. In terms of biological role, converts D-glucuronic acid to L-iduronic acid (IdoUA) residues. Plays an important role in the biosynthesis of the glycosaminoglycan/mucopolysaccharide dermatan sulfate. This Bos taurus (Bovine) protein is Dermatan-sulfate epimerase (DSE).